Reading from the N-terminus, the 117-residue chain is MHEYSIVSALIEQCEQHAQANHADKITRVDIKLGVMSGVEPSLLQTAFDTFKLDGICNAAQLNIQIQPLVILCQDCQTESVLSERTVVCPACQSFRTRVLDGEDMLLMQLEMEQNED.

H2 contributes to the Ni(2+) binding site. C73, C76, C89, and C92 together coordinate Zn(2+).

It belongs to the HypA/HybF family.

Its function is as follows. Involved in the maturation of [NiFe] hydrogenases. Required for nickel insertion into the metal center of the hydrogenase. The sequence is that of Hydrogenase maturation factor HypA from Shewanella baltica (strain OS195).